A 389-amino-acid polypeptide reads, in one-letter code: Equilibrative nucleotide transporter 8 (389 aa).

The next 10 helical transmembrane spans lie at valine 19–isoleucine 39, threonine 57–asparagine 77, asparagine 87–tryptophan 107, leucine 119–isoleucine 139, methionine 150–alanine 170, histidine 187–leucine 207, tryptophan 238–isoleucine 258, leucine 266–glycine 286, valine 331–isoleucine 351, and isoleucine 367–tryptophan 387.

The protein belongs to the SLC29A/ENT transporter (TC 2.A.57) family. In terms of tissue distribution, expressed in stems, flowers and siliques.

It localises to the cell membrane. Functionally, may be involved in nucleoside transport. The protein is Equilibrative nucleotide transporter 8 (ETN8) of Arabidopsis thaliana (Mouse-ear cress).